A 601-amino-acid chain; its full sequence is Elongation factor 4 (601 aa).

The tr-type G domain occupies 7-189 (DRIRNFSIIA…ALVTRLPAPK (183 aa)). Residues 19 to 24 (DHGKST) and 136 to 139 (NKVD) contribute to the GTP site.

It belongs to the TRAFAC class translation factor GTPase superfamily. Classic translation factor GTPase family. LepA subfamily.

Its subcellular location is the cell inner membrane. The enzyme catalyses GTP + H2O = GDP + phosphate + H(+). In terms of biological role, required for accurate and efficient protein synthesis under certain stress conditions. May act as a fidelity factor of the translation reaction, by catalyzing a one-codon backward translocation of tRNAs on improperly translocated ribosomes. Back-translocation proceeds from a post-translocation (POST) complex to a pre-translocation (PRE) complex, thus giving elongation factor G a second chance to translocate the tRNAs correctly. Binds to ribosomes in a GTP-dependent manner. The sequence is that of Elongation factor 4 from Granulibacter bethesdensis (strain ATCC BAA-1260 / CGDNIH1).